The sequence spans 208 residues: Uracil phosphoribosyltransferase (208 aa).

5-phospho-alpha-D-ribose 1-diphosphate contacts are provided by residues R78, R103, and 130 to 138 (DPMLATGGS). Residues I193 and 198-200 (GDA) each bind uracil. D199 lines the 5-phospho-alpha-D-ribose 1-diphosphate pocket.

Belongs to the UPRTase family. Mg(2+) serves as cofactor.

It carries out the reaction UMP + diphosphate = 5-phospho-alpha-D-ribose 1-diphosphate + uracil. It participates in pyrimidine metabolism; UMP biosynthesis via salvage pathway; UMP from uracil: step 1/1. With respect to regulation, allosterically activated by GTP. Functionally, catalyzes the conversion of uracil and 5-phospho-alpha-D-ribose 1-diphosphate (PRPP) to UMP and diphosphate. The polypeptide is Uracil phosphoribosyltransferase (Aliivibrio salmonicida (strain LFI1238) (Vibrio salmonicida (strain LFI1238))).